The sequence spans 83 residues: Small ribosomal subunit protein bS16 (83 aa).

It belongs to the bacterial ribosomal protein bS16 family.

The chain is Small ribosomal subunit protein bS16 from Pseudomonas aeruginosa (strain UCBPP-PA14).